We begin with the raw amino-acid sequence, 336 residues long: Alcohol dehydrogenase, propanol-preferring (336 aa).

Zn(2+) contacts are provided by Cys37, His58, Cys89, Cys92, Cys95, Cys103, and Cys145.

The protein belongs to the zinc-containing alcohol dehydrogenase family. The cofactor is Zn(2+).

The catalysed reaction is a primary alcohol + NAD(+) = an aldehyde + NADH + H(+). It carries out the reaction a secondary alcohol + NAD(+) = a ketone + NADH + H(+). Preferred specificity is towards 1-propanol. This is Alcohol dehydrogenase, propanol-preferring (adhP) from Escherichia coli (strain K12).